The chain runs to 294 residues: Bifunctional protein FolD (294 aa).

NADP(+) contacts are provided by residues 169–171, Thr-196, and Val-237; that span reads GRG.

The protein belongs to the tetrahydrofolate dehydrogenase/cyclohydrolase family. Homodimer.

It catalyses the reaction (6R)-5,10-methylene-5,6,7,8-tetrahydrofolate + NADP(+) = (6R)-5,10-methenyltetrahydrofolate + NADPH. It carries out the reaction (6R)-5,10-methenyltetrahydrofolate + H2O = (6R)-10-formyltetrahydrofolate + H(+). The protein operates within one-carbon metabolism; tetrahydrofolate interconversion. In terms of biological role, catalyzes the oxidation of 5,10-methylenetetrahydrofolate to 5,10-methenyltetrahydrofolate and then the hydrolysis of 5,10-methenyltetrahydrofolate to 10-formyltetrahydrofolate. The protein is Bifunctional protein FolD of Renibacterium salmoninarum (strain ATCC 33209 / DSM 20767 / JCM 11484 / NBRC 15589 / NCIMB 2235).